The chain runs to 473 residues: Trigger factor (473 aa).

Positions 171 to 256 (GDRVTIDFVG…VTKIQAAGEA (86 aa)) constitute a PPIase FKBP-type domain. Positions 439–473 (KEALFADEDGDDTTGGKPADKAEAKDESKTEAKAD) are disordered. Residues 456–473 (PADKAEAKDESKTEAKAD) are compositionally biased toward basic and acidic residues.

This sequence belongs to the FKBP-type PPIase family. Tig subfamily.

It is found in the cytoplasm. It carries out the reaction [protein]-peptidylproline (omega=180) = [protein]-peptidylproline (omega=0). Functionally, involved in protein export. Acts as a chaperone by maintaining the newly synthesized protein in an open conformation. Functions as a peptidyl-prolyl cis-trans isomerase. This chain is Trigger factor, found in Methylobacterium radiotolerans (strain ATCC 27329 / DSM 1819 / JCM 2831 / NBRC 15690 / NCIMB 10815 / 0-1).